A 193-amino-acid chain; its full sequence is Potassium-transporting ATPase KdpC subunit (193 aa).

Residues 14 to 34 form a helical membrane-spanning segment; the sequence is ITFTFLVLCGLVYPLIVTGIA.

It belongs to the KdpC family. As to quaternary structure, the system is composed of three essential subunits: KdpA, KdpB and KdpC.

The protein resides in the cell membrane. Its function is as follows. Part of the high-affinity ATP-driven potassium transport (or Kdp) system, which catalyzes the hydrolysis of ATP coupled with the electrogenic transport of potassium into the cytoplasm. This subunit acts as a catalytic chaperone that increases the ATP-binding affinity of the ATP-hydrolyzing subunit KdpB by the formation of a transient KdpB/KdpC/ATP ternary complex. This is Potassium-transporting ATPase KdpC subunit from Bacillus anthracis (strain A0248).